The chain runs to 158 residues: 6,7-dimethyl-8-ribityllumazine synthase (158 aa).

5-amino-6-(D-ribitylamino)uracil contacts are provided by residues phenylalanine 22, 57-59, and 81-83; these read AVE and AVI. Residue 86 to 87 participates in (2S)-2-hydroxy-3-oxobutyl phosphate binding; that stretch reads GT. Histidine 89 serves as the catalytic Proton donor. A 5-amino-6-(D-ribitylamino)uracil-binding site is contributed by phenylalanine 114. Residue arginine 128 participates in (2S)-2-hydroxy-3-oxobutyl phosphate binding.

The protein belongs to the DMRL synthase family. In terms of assembly, forms an icosahedral capsid composed of 60 subunits, arranged as a dodecamer of pentamers.

It catalyses the reaction (2S)-2-hydroxy-3-oxobutyl phosphate + 5-amino-6-(D-ribitylamino)uracil = 6,7-dimethyl-8-(1-D-ribityl)lumazine + phosphate + 2 H2O + H(+). It participates in cofactor biosynthesis; riboflavin biosynthesis; riboflavin from 2-hydroxy-3-oxobutyl phosphate and 5-amino-6-(D-ribitylamino)uracil: step 1/2. In terms of biological role, catalyzes the formation of 6,7-dimethyl-8-ribityllumazine by condensation of 5-amino-6-(D-ribitylamino)uracil with 3,4-dihydroxy-2-butanone 4-phosphate. This is the penultimate step in the biosynthesis of riboflavin. The chain is 6,7-dimethyl-8-ribityllumazine synthase from Shewanella oneidensis (strain ATCC 700550 / JCM 31522 / CIP 106686 / LMG 19005 / NCIMB 14063 / MR-1).